An 886-amino-acid polypeptide reads, in one-letter code: Translation initiation factor IF-2 (886 aa).

Disordered stretches follow at residues 1–25 (MSET…LKRP), 50–229 (RRAL…PAEE), and 253–272 (KGAE…TGDE). The span at 50–60 (RRALGEPHVLR) shows a compositional bias: basic and acidic residues. The segment covering 63–73 (APALDVVAPAP) has biased composition (low complexity). Over residues 74-83 (QAAPPAPTQQ) the composition is skewed to pro residues. The span at 84–106 (PQPRVASRPQPQQRSSSGVILRS) shows a compositional bias: low complexity. Over residues 107 to 181 (LTEEEREARS…KRRSESEAKR (75 aa)) the composition is skewed to basic and acidic residues. Over residues 185 to 225 (GGEPAPAGANAAPRKAPALSAAPGSAAPSGQPGPAGAVGAR) the composition is skewed to low complexity. The 171-residue stretch at 383-553 (SRPPVVTIMG…ALQAELLDLK (171 aa)) folds into the tr-type G domain. Positions 392-399 (GHVDHGKT) are G1. 392–399 (GHVDHGKT) lines the GTP pocket. The interval 417–421 (GITQH) is G2. The G3 stretch occupies residues 439 to 442 (DTPG). Residues 439 to 443 (DTPGH) and 493 to 496 (NKID) contribute to the GTP site. Residues 493 to 496 (NKID) are G4. The G5 stretch occupies residues 529-531 (SAT).

The protein belongs to the TRAFAC class translation factor GTPase superfamily. Classic translation factor GTPase family. IF-2 subfamily.

Its subcellular location is the cytoplasm. Functionally, one of the essential components for the initiation of protein synthesis. Protects formylmethionyl-tRNA from spontaneous hydrolysis and promotes its binding to the 30S ribosomal subunits. Also involved in the hydrolysis of GTP during the formation of the 70S ribosomal complex. The sequence is that of Translation initiation factor IF-2 from Methylocella silvestris (strain DSM 15510 / CIP 108128 / LMG 27833 / NCIMB 13906 / BL2).